Reading from the N-terminus, the 257-residue chain is UPF0246 protein RHOS4_29700 (257 aa).

Belongs to the UPF0246 family.

This is UPF0246 protein RHOS4_29700 from Cereibacter sphaeroides (strain ATCC 17023 / DSM 158 / JCM 6121 / CCUG 31486 / LMG 2827 / NBRC 12203 / NCIMB 8253 / ATH 2.4.1.) (Rhodobacter sphaeroides).